We begin with the raw amino-acid sequence, 571 residues long: DDB1- and CUL4-associated factor 11 homolog (571 aa).

Positions 51–75 are disordered; that stretch reads RMKPNHSNDSDTDFSSDDEGCPKMT. Residues 60 to 69 show a composition bias toward acidic residues; sequence SDTDFSSDDE. WD repeat units follow at residues 162-201, 266-305, 309-349, 357-396, 435-479, and 482-521; these read RVAT…SKYR, RDHC…RIRT, AHED…DGDV, GHRD…NMSG, GHSV…VSRR, and GHTA…EGVI.

It belongs to the WD repeat LEC14B family.

Functionally, involved in regulation of lifespan. Required for dopaminergic CEP neuron degeneration in response to Mn(2+). Inhibits the skn-1-mediated up-regulation of tatn-1. This chain is DDB1- and CUL4-associated factor 11 homolog, found in Caenorhabditis elegans.